The following is a 161-amino-acid chain: GANAAPQGQGKVTFNGTVVDAPCGIDAQSADQSIEFGQVSKVLLNNGGSSTPKNFDIKLTDCDVTNYKKAGKAGTVSLTFSGVQAGTDMLQTVGTTGTAILVKDPHGKAVKFDGATATGVSSLVDGDNTIHFTALVKKDTSGNDVAEGAFSAVANFNLIYQ.

The protein belongs to the fimbrial protein family.

Its subcellular location is the secreted. It is found in the fimbrium. Fimbriae (also called pili), polar filaments radiating from the surface of the bacterium to a length of 0.5-1.5 micrometers and numbering 100-300 per cell, enable bacteria to colonize the epithelium of specific host organs. This Escherichia coli protein is PRS fimbrial major pilin protein (prsA).